Consider the following 457-residue polypeptide: Proton-translocating ferredoxin:NAD(+) oxidoreductase complex subunit C (457 aa).

4Fe-4S ferredoxin-type domains lie at 353–386 (TKND…MLSI) and 396–427 (AKEE…YIRY). Cys-365, Cys-368, Cys-371, Cys-375, Cys-405, Cys-408, Cys-411, and Cys-415 together coordinate [4Fe-4S] cluster. The segment at 433-457 (RAAGEREKAKAAKAKEKKEKEEVLK) is disordered.

This sequence belongs to the 4Fe4S bacterial-type ferredoxin family. RnfC subfamily. In terms of assembly, the complex is composed of six subunits: RnfA, RnfB, RnfC, RnfD, RnfE and RnfG. [4Fe-4S] cluster is required as a cofactor.

Its subcellular location is the cell membrane. Functionally, part of a membrane-bound complex that couples electron transfer with translocation of ions across the membrane. Couples electron transfer from reduced ferredoxin to NAD(+) with translocation of H(+) out of the cell. Essential for energy conservation during autotrophic growth. Contributes to ATP synthesis during heterotrophic growth. The sequence is that of Proton-translocating ferredoxin:NAD(+) oxidoreductase complex subunit C from Clostridium ljungdahlii (strain ATCC 55383 / DSM 13528 / PETC).